The primary structure comprises 709 residues: MVIRITPIAYYRNIGISAHIDAGKTTTTERILFYTGVNHKIGEVHTGSATMDWMEQEQERGITITSAATTCFWSGMAKQFPVHRINIIDTPGHVDFTIEVERSMRVLDGVVMVYCGVGGVQPQSETVWRQANKYKVPRIAFVNKMDRMGANYLHVVEELKTKLFANPVPIQLAIGSENKFTGVVDLIKMKAINWNDSDQGVTFFYEDIPNDLIELSNFWRNHLVESAVEESEELLDKYLSNSTQLTEYDIKQALRKRVLKNEILLVTCGSAFKNKGVQSMLDAVVEYLPSPTDLVSVKGILKKDGCALEERYVKDSEPFSALAFKVATDPFVGNLTFFRVYSGVVNSGDSIFNSVKEKRERFGRIVQMHANKREEIKSVYAGDIAAAIGLKDVSTGDTLCDCNHPIILESMEFPDPVISVMVEAKTKLDQEKMGLALSRLSQEDPSFRVWIDQDSGQTIIAGMGELHLEILVERMRREFSIEANVGKPQVAYRETIRSVIKQEGKFIRQSGGRGQFGHVWLLLEPMNINNESSSDSYKFFNKIVGGVIPKEYIPAVDKGIQEQISNGVLAGYPIVGVSVTIFDGSYHEVDSSEIAFKIAGSIAFKEGFMRANPVLLEPIMKVEIETPEEYMGDVIADLNRRRGIISNLENSMNIGRIIHAKVPLSEMFGYATALRSQTQGRASHSMEFLKYNEVPNNIAQSIIESRRVK.

In terms of domain architecture, tr-type G spans 9 to 292; sequence AYYRNIGISA…AVVEYLPSPT (284 aa). Residues 18–25, 89–93, and 143–146 contribute to the GTP site; these read AHIDAGKT, DTPGH, and NKMD.

The protein belongs to the TRAFAC class translation factor GTPase superfamily. Classic translation factor GTPase family. EF-G/EF-2 subfamily.

The protein resides in the cytoplasm. In terms of biological role, catalyzes the GTP-dependent ribosomal translocation step during translation elongation. During this step, the ribosome changes from the pre-translocational (PRE) to the post-translocational (POST) state as the newly formed A-site-bound peptidyl-tRNA and P-site-bound deacylated tRNA move to the P and E sites, respectively. Catalyzes the coordinated movement of the two tRNA molecules, the mRNA and conformational changes in the ribosome. The sequence is that of Elongation factor G from Blochmanniella floridana.